Consider the following 190-residue polypeptide: Protein LIGHT-DEPENDENT SHORT HYPOCOTYLS 1 (190 aa).

Positions M1–Y26 are enriched in polar residues. Disordered regions lie at residues M1–N28 and G145–V190. Residues R25 to R152 enclose the ALOG domain. The Nuclear localization signal motif lies at K150–R154. Low complexity predominate over residues Q158–Q179. Over residues S180–V190 the composition is skewed to polar residues.

This sequence belongs to the plant homeotic and developmental regulators ALOG protein family. In terms of tissue distribution, expressed in hypocotyls, shoot apices and lateral root primordia and, weakly, in vascular tissues.

The protein resides in the nucleus. Its function is as follows. Probable transcription regulator that acts as a developmental regulator by promoting cell growth in response to continuous red (cR), far-red (cFR) and blue (cB) light in a phytochrome-dependent manner, at least during seedling development. The chain is Protein LIGHT-DEPENDENT SHORT HYPOCOTYLS 1 (LSH1) from Arabidopsis thaliana (Mouse-ear cress).